Here is a 238-residue protein sequence, read N- to C-terminus: dITP/XTP pyrophosphatase (238 aa).

7–12 (SANQHK) serves as a coordination point for substrate. The Proton acceptor role is filled by D89. D89 contacts Mg(2+). Residues S90, 191–194 (FGYD), K217, and 222–223 (HR) each bind substrate.

The protein belongs to the HAM1 NTPase family. In terms of assembly, homodimer. The cofactor is Mg(2+).

It catalyses the reaction XTP + H2O = XMP + diphosphate + H(+). The enzyme catalyses dITP + H2O = dIMP + diphosphate + H(+). The catalysed reaction is ITP + H2O = IMP + diphosphate + H(+). Functionally, pyrophosphatase that catalyzes the hydrolysis of nucleoside triphosphates to their monophosphate derivatives, with a high preference for the non-canonical purine nucleotides XTP (xanthosine triphosphate), dITP (deoxyinosine triphosphate) and ITP. Seems to function as a house-cleaning enzyme that removes non-canonical purine nucleotides from the nucleotide pool, thus preventing their incorporation into DNA/RNA and avoiding chromosomal lesions. This is dITP/XTP pyrophosphatase from Helicobacter hepaticus (strain ATCC 51449 / 3B1).